Reading from the N-terminus, the 235-residue chain is Ribonuclease PH (235 aa).

Residues R86 and 124–126 each bind phosphate; that span reads GTR.

The protein belongs to the RNase PH family. As to quaternary structure, homohexameric ring arranged as a trimer of dimers.

The catalysed reaction is tRNA(n+1) + phosphate = tRNA(n) + a ribonucleoside 5'-diphosphate. Phosphorolytic 3'-5' exoribonuclease that plays an important role in tRNA 3'-end maturation. Removes nucleotide residues following the 3'-CCA terminus of tRNAs; can also add nucleotides to the ends of RNA molecules by using nucleoside diphosphates as substrates, but this may not be physiologically important. Probably plays a role in initiation of 16S rRNA degradation (leading to ribosome degradation) during starvation. The protein is Ribonuclease PH of Francisella tularensis subsp. novicida (strain U112).